The sequence spans 214 residues: CASP-like protein 3A1 (214 aa).

Over 1–49 (MTNGQKIEVAVQLPESKVAATENNETMSGPLVVGGGVAKPFGRKADVMH) the chain is Cytoplasmic. A helical transmembrane segment spans residues 50-70 (VILRLLCTITSVTAVSFMVTA). Over 71 to 96 (HQSSTVSIYGFMLPVRSKWSFSHSFE) the chain is Extracellular. The helical transmembrane segment at 97–117 (YLVGVSAAVAAHSLLQLLISM) threads the bilayer. Over 118–132 (SRLLRKSPVIPSRSH) the chain is Cytoplasmic. A helical membrane pass occupies residues 133–153 (AWLIFAGDQVFAYAMISAGAA). Topologically, residues 154–182 (ASGVTNLNRTGIQHTALPNFCKPLNYFCN) are extracellular. Asparagine 161 carries an N-linked (GlcNAc...) asparagine glycan. Residues 183–203 (HVAVSIAFAFISCLLLAALAV) form a helical membrane-spanning segment. Residues 204–214 (QEVIWLSKSKY) are Cytoplasmic-facing.

Belongs to the Casparian strip membrane proteins (CASP) family. As to quaternary structure, homodimer and heterodimers.

The protein resides in the cell membrane. The sequence is that of CASP-like protein 3A1 from Ricinus communis (Castor bean).